The sequence spans 144 residues: Interleukin-3 (144 aa).

The N-terminal stretch at 1–17 is a signal peptide; it reads MSSLSILHLLLLLLALH.

The protein belongs to the IL-3 family. Monomer.

The protein localises to the secreted. Granulocyte/macrophage colony-stimulating factors are cytokines that act in hematopoiesis by controlling the production, differentiation, and function of 2 related white cell populations of the blood, the granulocytes and the monocytes-macrophages. Functionally, this CSF induces granulocytes, macrophages, mast cells, stem cells, erythroid cells, eosinophils and megakaryocytes. The polypeptide is Interleukin-3 (IL3) (Bos taurus (Bovine)).